A 1048-amino-acid polypeptide reads, in one-letter code: FERM, ARHGEF and pleckstrin domain-containing protein 1 (1048 aa).

The interval 1-37 (MGEIEQKPTPASRLGAPENSGISTLERGQKPPPTPSG) is disordered. S20 and S23 each carry phosphoserine. Phosphothreonine is present on T24. Positions 40-320 (MTVKIQMLDD…EHHAFFRLFE (281 aa)) constitute an FERM domain. Phosphoserine occurs at positions 340, 373, 389, 403, 427, 433, and 437. Residues 361–536 (FERKHSKIHS…TDDEEEGRRK (176 aa)) are disordered. Polar residues predominate over residues 371 to 395 (TRSLVSQPTAPNSEVPKQSPQSASL). Composition is skewed to polar residues over residues 472 to 491 (STGSLTGSPHLSELSINSQG) and 498 to 513 (VTLSPNLSPDNKQASP). Residues S512 and S516 each carry the phosphoserine modification. The region spanning 542–733 (KAYYIAKEVS…TEMVAQLHGT (192 aa)) is the DH domain. A PH 1 domain is found at 762-859 (EFIRLGSLSK…WMEDIQMAID (98 aa)). Phosphoserine is present on residues S836, S875, and S881. The tract at residues 865-907 (NGPTPELLASSPPDNKSPDEATAADQESEDDLSASRTSLERQA) is disordered. Position 886 is a phosphothreonine (T886). Phosphoserine is present on residues S892, S899, and S902. The PH 2 domain maps to 935–1032 (ENQLSGNLLR…WMEVIRSATS (98 aa)).

As to quaternary structure, interacts with CADM1. Interacts with RAC1. As to expression, detected in brain cortex, hippocampus, striatum, olfactory bulb, cerebellum and hindbrain (at protein level).

Its subcellular location is the cell membrane. The protein localises to the synapse. It is found in the synaptosome. It localises to the cytoplasm. The protein resides in the cytosol. Its subcellular location is the cell projection. The protein localises to the filopodium. It is found in the dendrite. It localises to the dendritic spine. In terms of biological role, functions as a guanine nucleotide exchange factor for RAC1. May play a role in semaphorin signaling. Plays a role in the assembly and disassembly of dendritic filopodia, the formation of dendritic spines, regulation of dendrite length and ultimately the formation of synapses. The polypeptide is FERM, ARHGEF and pleckstrin domain-containing protein 1 (Farp1) (Mus musculus (Mouse)).